We begin with the raw amino-acid sequence, 529 residues long: Bifunctional purine biosynthesis protein PurH (529 aa).

The MGS-like domain maps to 1 to 148 (MNNARPIRRA…KNHKDVVIVV (148 aa)).

This sequence belongs to the PurH family.

It catalyses the reaction (6R)-10-formyltetrahydrofolate + 5-amino-1-(5-phospho-beta-D-ribosyl)imidazole-4-carboxamide = 5-formamido-1-(5-phospho-D-ribosyl)imidazole-4-carboxamide + (6S)-5,6,7,8-tetrahydrofolate. It carries out the reaction IMP + H2O = 5-formamido-1-(5-phospho-D-ribosyl)imidazole-4-carboxamide. Its pathway is purine metabolism; IMP biosynthesis via de novo pathway; 5-formamido-1-(5-phospho-D-ribosyl)imidazole-4-carboxamide from 5-amino-1-(5-phospho-D-ribosyl)imidazole-4-carboxamide (10-formyl THF route): step 1/1. The protein operates within purine metabolism; IMP biosynthesis via de novo pathway; IMP from 5-formamido-1-(5-phospho-D-ribosyl)imidazole-4-carboxamide: step 1/1. The protein is Bifunctional purine biosynthesis protein PurH of Shewanella amazonensis (strain ATCC BAA-1098 / SB2B).